A 740-amino-acid polypeptide reads, in one-letter code: Elongation factor 2 (740 aa).

The tr-type G domain maps to Ala23–Asn264. GTP is bound by residues Ala32–Thr39, Asp98–His102, and Asn152–Asp155. Residue His605 is modified to Diphthamide.

It belongs to the TRAFAC class translation factor GTPase superfamily. Classic translation factor GTPase family. EF-G/EF-2 subfamily.

Its subcellular location is the cytoplasm. Functionally, catalyzes the GTP-dependent ribosomal translocation step during translation elongation. During this step, the ribosome changes from the pre-translocational (PRE) to the post-translocational (POST) state as the newly formed A-site-bound peptidyl-tRNA and P-site-bound deacylated tRNA move to the P and E sites, respectively. Catalyzes the coordinated movement of the two tRNA molecules, the mRNA and conformational changes in the ribosome. In Pyrobaculum arsenaticum (strain DSM 13514 / JCM 11321 / PZ6), this protein is Elongation factor 2.